We begin with the raw amino-acid sequence, 387 residues long: DNA primase small subunit PriS (387 aa).

Active-site residues include aspartate 98, aspartate 100, and aspartate 289.

This sequence belongs to the eukaryotic-type primase small subunit family. Heterodimer of a small subunit (PriS) and a large subunit (PriL). The cofactor is Mg(2+). Mn(2+) is required as a cofactor.

In terms of biological role, catalytic subunit of DNA primase, an RNA polymerase that catalyzes the synthesis of short RNA molecules used as primers for DNA polymerase during DNA replication. The small subunit contains the primase catalytic core and has DNA synthesis activity on its own. Binding to the large subunit stabilizes and modulates the activity, increasing the rate of DNA synthesis while decreasing the length of the DNA fragments, and conferring RNA synthesis capability. The DNA polymerase activity may enable DNA primase to also catalyze primer extension after primer synthesis. May also play a role in DNA repair. This chain is DNA primase small subunit PriS, found in Halorubrum lacusprofundi (strain ATCC 49239 / DSM 5036 / JCM 8891 / ACAM 34).